The chain runs to 592 residues: Aspartate--tRNA ligase (592 aa).

Glu-171 contributes to the L-aspartate binding site. The tract at residues 195–198 is aspartate; it reads QLFK. Arg-217 contacts L-aspartate. Residues 217–219 and Gln-226 contribute to the ATP site; that span reads RDE. His-448 lines the L-aspartate pocket. Glu-482 contributes to the ATP binding site. Arg-489 contacts L-aspartate. 534-537 provides a ligand contact to ATP; it reads GLDR.

This sequence belongs to the class-II aminoacyl-tRNA synthetase family. Type 1 subfamily. In terms of assembly, homodimer.

The protein localises to the cytoplasm. The enzyme catalyses tRNA(Asp) + L-aspartate + ATP = L-aspartyl-tRNA(Asp) + AMP + diphosphate. Its function is as follows. Catalyzes the attachment of L-aspartate to tRNA(Asp) in a two-step reaction: L-aspartate is first activated by ATP to form Asp-AMP and then transferred to the acceptor end of tRNA(Asp). The sequence is that of Aspartate--tRNA ligase from Vibrio atlanticus (strain LGP32) (Vibrio splendidus (strain Mel32)).